Reading from the N-terminus, the 134-residue chain is Large ribosomal subunit protein bL17 (134 aa).

It belongs to the bacterial ribosomal protein bL17 family. Part of the 50S ribosomal subunit. Contacts protein L32.

This chain is Large ribosomal subunit protein bL17, found in Paracidovorax citrulli (strain AAC00-1) (Acidovorax citrulli).